The chain runs to 316 residues: Ornithine carbamoyltransferase (316 aa).

Residues 59–62, Q86, R110, and 137–140 each bind carbamoyl phosphate; these read STRT and HPCQ. L-ornithine-binding positions include N168, D232, and 236–237; that span reads SM. Residues 273-274 and R301 each bind carbamoyl phosphate; that span reads CL.

It belongs to the aspartate/ornithine carbamoyltransferase superfamily. OTCase family.

It localises to the cytoplasm. The catalysed reaction is carbamoyl phosphate + L-ornithine = L-citrulline + phosphate + H(+). Its pathway is amino-acid degradation; L-arginine degradation via ADI pathway; carbamoyl phosphate from L-arginine: step 2/2. Reversibly catalyzes the transfer of the carbamoyl group from carbamoyl phosphate (CP) to the N(epsilon) atom of ornithine (ORN) to produce L-citrulline. This chain is Ornithine carbamoyltransferase, found in Listeria monocytogenes serotype 4a (strain HCC23).